We begin with the raw amino-acid sequence, 108 residues long: Large ribosomal subunit protein bL31B (108 aa).

The interval 85-108 (PKPETSVEEVLPKGKKKAPAKKKK) is disordered. Residues 97–108 (KGKKKAPAKKKK) show a composition bias toward basic residues.

It belongs to the bacterial ribosomal protein bL31 family. Type B subfamily. In terms of assembly, part of the 50S ribosomal subunit.

The protein is Large ribosomal subunit protein bL31B of Chlamydia muridarum (strain MoPn / Nigg).